The sequence spans 105 residues: Met repressor (105 aa).

This sequence belongs to the MetJ family. As to quaternary structure, homodimer.

The protein localises to the cytoplasm. Its function is as follows. This regulatory protein, when combined with SAM (S-adenosylmethionine) represses the expression of the methionine regulon and of enzymes involved in SAM synthesis. The protein is Met repressor of Glaesserella parasuis serovar 5 (strain SH0165) (Haemophilus parasuis).